Reading from the N-terminus, the 270-residue chain is ATP synthase subunit a (270 aa).

5 helical membrane-spanning segments follow: residues 37 to 57, 98 to 118, 143 to 163, 208 to 228, and 239 to 259; these read NVHI…LGVF, IAPL…MDLV, DVNI…YYSI, LFGN…MLPW, and AIFH…LTIV.

The protein belongs to the ATPase A chain family. F-type ATPases have 2 components, CF(1) - the catalytic core - and CF(0) - the membrane proton channel. CF(1) has five subunits: alpha(3), beta(3), gamma(1), delta(1), epsilon(1). CF(0) has three main subunits: a(1), b(2) and c(9-12). The alpha and beta chains form an alternating ring which encloses part of the gamma chain. CF(1) is attached to CF(0) by a central stalk formed by the gamma and epsilon chains, while a peripheral stalk is formed by the delta and b chains.

It is found in the cell inner membrane. Its function is as follows. Key component of the proton channel; it plays a direct role in the translocation of protons across the membrane. The sequence is that of ATP synthase subunit a from Vibrio cholerae serotype O1 (strain ATCC 39315 / El Tor Inaba N16961).